The following is a 372-amino-acid chain: MPHQHILMLFGLLPVATNISTWWNFGSMLLTCSALQIMTGFFLAVHYTANINLAFSSIIHNTRDVPHGWMMQNLHAIGASMFFICIYIHMARGLYYGSYLNKETWLSGTTLLIMLMATAFFGYVLPWGQMSFWAATVITNLLTAIPYLGTTMTTWLWGGFAINDPTLTRFFALHFILPFGIISLSSLHIMLLHEEGSSNPLGTNSDIDKIPFHPYHTYKDLFMISSMIMIMLLTISFLPDIFNDPENFFKANLLTTPQHIKPEWYFLFAYGILRSIPNKLGGALALAMSIMILLTVPFTHTANTRSMTFRPFMQLMFWTLMATFIIITWTATKPVEAPYTTISQVASTLYFMFFMSNLILGWLENKIMKTQL.

4 helical membrane passes run Phe25–Val45, Trp69–Met90, Trp105–Leu125, and Phe170–Met190. Positions 75 and 89 each coordinate heme b. Residues His174 and His188 each coordinate heme b. His193 contributes to the a ubiquinone binding site. A run of 4 helical transmembrane segments spans residues Tyr218–Leu238, Leu280–His300, Phe312–Thr332, and Tyr339–Leu358.

Belongs to the cytochrome b family. In terms of assembly, the cytochrome bc1 complex contains 3 respiratory subunits (MT-CYB, CYC1 and UQCRFS1), 2 core proteins (UQCRC1 and UQCRC2) and probably 6 low-molecular weight proteins. Heme b is required as a cofactor.

The protein localises to the mitochondrion inner membrane. In terms of biological role, component of the ubiquinol-cytochrome c reductase complex (complex III or cytochrome b-c1 complex) that is part of the mitochondrial respiratory chain. The b-c1 complex mediates electron transfer from ubiquinol to cytochrome c. Contributes to the generation of a proton gradient across the mitochondrial membrane that is then used for ATP synthesis. This is Cytochrome b (MT-CYB) from Sanzinia madagascariensis (Madagascar tree boa).